The chain runs to 655 residues: Protein movement modulator (655 aa).

Residues 1–54 (MEQPSILVKILHSIPHVNYTFRRVNDTFNPDSDVYLEPTNNKLQCQQKGIELQS) lie on the Extracellular side of the membrane. 2 N-linked (GlcNAc...) asparagine glycosylation sites follow: asparagine 18 and asparagine 25. The helical transmembrane segment at 55 to 75 (LVILASIPAGLLIGSLLGLLL) threads the bilayer. Over 76-95 (YLLTRCCDRRQRKPSAQRCQ) the chain is Cytoplasmic. Residues 96–116 (SCSLVIITLMTCAAIGLGLYG) form a helical membrane-spanning segment. Residues 117–231 (NDDFHNGLLQ…GEFYESIRWP (115 aa)) are Extracellular-facing. 3 N-linked (GlcNAc...) asparagine glycosylation sites follow: asparagine 171, asparagine 188, and asparagine 211. Residues 232 to 252 (ATLAFLTVLLLLCTVLVIGVA) traverse the membrane as a helical segment. Residues 253-258 (RRSRCT) lie on the Cytoplasmic side of the membrane. The chain crosses the membrane as a helical span at residues 259 to 279 (LIFFSVSGLFCIIICWLLAGV). At 280–401 (YLASSVAAGD…ALRGLCGGGL (122 aa)) the chain is on the extracellular side. Residues asparagine 326 and asparagine 372 are each glycosylated (N-linked (GlcNAc...) asparagine). The chain crosses the membrane as a helical span at residues 402–422 (LGLSLMMVAGLLTSFLLTILV). Over 423–655 (YADSHAWIYL…CKTLESNDFY (233 aa)) the chain is Cytoplasmic. The tract at residues 446–576 (APLFPASNAP…NNHYNNTQHR (131 aa)) is disordered. The span at 450-464 (PASNAPSASISPTAP) shows a compositional bias: low complexity. The segment covering 465–480 (LSTGTINRTLLHHQQA) has biased composition (polar residues). Residues 482–509 (SGGGSGTLPGSGGGAGAGGGVGANGHNG) show a composition bias toward gly residues. Low complexity-rich tracts occupy residues 526-539 (SPSS…STAT) and 546-576 (SYHN…TQHR). Phosphoserine is present on residues serine 597 and serine 599.

Belongs to the tweety family.

It is found in the cell membrane. It catalyses the reaction chloride(in) = chloride(out). Probable large-conductance Ca(2+)-activated chloride channel. Modulator of embryonic movement. This is Protein movement modulator from Drosophila melanogaster (Fruit fly).